The sequence spans 243 residues: 3-deoxy-manno-octulosonate cytidylyltransferase (243 aa).

It belongs to the KdsB family.

It localises to the cytoplasm. The catalysed reaction is 3-deoxy-alpha-D-manno-oct-2-ulosonate + CTP = CMP-3-deoxy-beta-D-manno-octulosonate + diphosphate. It participates in nucleotide-sugar biosynthesis; CMP-3-deoxy-D-manno-octulosonate biosynthesis; CMP-3-deoxy-D-manno-octulosonate from 3-deoxy-D-manno-octulosonate and CTP: step 1/1. Its pathway is bacterial outer membrane biogenesis; lipopolysaccharide biosynthesis. Its function is as follows. Activates KDO (a required 8-carbon sugar) for incorporation into bacterial lipopolysaccharide in Gram-negative bacteria. This chain is 3-deoxy-manno-octulosonate cytidylyltransferase, found in Helicobacter pylori (strain P12).